The primary structure comprises 94 residues: uncharacterized protein (94 aa).

The first 22 residues, 1 to 22 (MIMKNCLLLGALLMGFTGVAMA), serve as a signal peptide directing secretion.

This is an uncharacterized protein from Escherichia coli (strain K12).